The sequence spans 146 residues: Hemoglobin subunit beta (146 aa).

Val-1 is subject to N-acetylvaline. Residues 2 to 146 enclose the Globin domain; the sequence is HLTADEKVSL…VANALAHKYH (145 aa). Ser-44 is modified (phosphoserine). Lys-59 is modified (N6-acetyllysine). Heme b is bound at residue His-63. Lys-82 carries the N6-acetyllysine modification. His-92 contacts heme b. Cys-93 is subject to S-nitrosocysteine. Lys-144 is subject to N6-acetyllysine.

This sequence belongs to the globin family. As to quaternary structure, heterotetramer of two alpha chains and two beta chains. In terms of tissue distribution, red blood cells.

Functionally, involved in oxygen transport from the lung to the various peripheral tissues. In Tamias striatus (Eastern chipmunk), this protein is Hemoglobin subunit beta.